The primary structure comprises 551 residues: Sialic acid-binding Ig-like lectin 5 (551 aa).

Residues 1–16 (MLPLLLLPLLWGGSLQ) form the signal peptide. Residues 17-441 (EKPVYELQVQ…LGTGVVPAAL (425 aa)) are Extracellular-facing. The Ig-like V-type domain maps to 19-136 (PVYELQVQKS…KYSYQQNKLN (118 aa)). 3 disulfides stabilise this stretch: cysteine 36-cysteine 170, cysteine 41-cysteine 101, and cysteine 164-cysteine 213. Asparagine 100 is a glycosylation site (N-linked (GlcNAc...) asparagine). Residues arginine 119, lysine 127, and serine 129 each contribute to the N-acetylneuraminate site. The Ig-like C2-type 1 domain occupies 146–229 (PDIHFLEPLE…AQVTTERTVQ (84 aa)). The segment at 189 to 210 (DPETTRSSELTLTPRPEDHGTN) is disordered. Asparagine 210, asparagine 231, and asparagine 253 each carry an N-linked (GlcNAc...) asparagine glycan. The 95-residue stretch at 236–330 (PQTITIFRNG…GFLQIFLNLS (95 aa)) folds into the Ig-like C2-type 2 domain. Cysteine 269 and cysteine 314 form a disulfide bridge. Asparagine 328, asparagine 375, asparagine 384, and asparagine 393 each carry an N-linked (GlcNAc...) asparagine glycan. Residues 442 to 462 (GGAGVMALLCICLCLIFFLIV) form a helical membrane-spanning segment. Topologically, residues 463-551 (KARRKQAAGR…TEYSEIKTSK (89 aa)) are cytoplasmic. Residues 469–551 (AAGRPEKMDD…TEYSEIKTSK (83 aa)) are disordered. Residues 518 to 523 (LHYASL) carry the ITIM motif motif. The segment covering 528–537 (MKSREPKDQE) has biased composition (basic and acidic residues). Residues 542 to 547 (TEYSEI) carry the SLAM-like motif motif.

Belongs to the immunoglobulin superfamily. SIGLEC (sialic acid binding Ig-like lectin) family. As to expression, expressed by monocytic/myeloid lineage cells. Found at high levels in peripheral blood leukocytes, spleen, bone marrow and at lower levels in lymph node, lung, appendix, placenta, pancreas and thymus. Expressed by monocytes and neutrophils but absent from leukemic cell lines representing early stages of myelomonocytic differentiation.

It localises to the membrane. Its function is as follows. Putative adhesion molecule that mediates sialic-acid dependent binding to cells. Binds equally to alpha-2,3-linked and alpha-2,6-linked sialic acid. The sialic acid recognition site may be masked by cis interactions with sialic acids on the same cell surface. In Homo sapiens (Human), this protein is Sialic acid-binding Ig-like lectin 5 (SIGLEC5).